The chain runs to 208 residues: Methylthioribulose-1-phosphate dehydratase (208 aa).

Zn(2+) contacts are provided by H96 and H98.

The protein belongs to the aldolase class II family. MtnB subfamily. Zn(2+) is required as a cofactor.

It catalyses the reaction 5-(methylsulfanyl)-D-ribulose 1-phosphate = 5-methylsulfanyl-2,3-dioxopentyl phosphate + H2O. It participates in amino-acid biosynthesis; L-methionine biosynthesis via salvage pathway; L-methionine from S-methyl-5-thio-alpha-D-ribose 1-phosphate: step 2/6. In terms of biological role, catalyzes the dehydration of methylthioribulose-1-phosphate (MTRu-1-P) into 2,3-diketo-5-methylthiopentyl-1-phosphate (DK-MTP-1-P). This chain is Methylthioribulose-1-phosphate dehydratase, found in Pseudomonas fluorescens (strain Pf0-1).